A 353-amino-acid polypeptide reads, in one-letter code: Photosystem II protein D1 (353 aa).

At threonine 2 the chain carries N-acetylthreonine. Phosphothreonine is present on threonine 2. The next 3 helical transmembrane spans lie at 29-46 (YIGWFGVLMIPTLLTATS), 118-133 (HFLLGVACYMGREWEL), and 142-156 (WIAVAYSAPVAAATA). Chlorophyll a is bound at residue histidine 118. Tyrosine 126 is a binding site for pheophytin a. Positions 170 and 189 each coordinate [CaMn4O5] cluster. Residues 197 to 218 (FHMLGVAGVFGGSLFSAMHGSL) form a helical membrane-spanning segment. Histidine 198 is a chlorophyll a binding site. Residues histidine 215 and 264 to 265 (SF) each bind a quinone. A Fe cation-binding site is contributed by histidine 215. Histidine 272 is a binding site for Fe cation. The chain crosses the membrane as a helical span at residues 274-288 (FLAAWPVVGIWFTAL). Residues histidine 332, glutamate 333, aspartate 342, and alanine 344 each contribute to the [CaMn4O5] cluster site. Positions 345–353 (AVEANSIDG) are excised as a propeptide.

This sequence belongs to the reaction center PufL/M/PsbA/D family. As to quaternary structure, PSII is composed of 1 copy each of membrane proteins PsbA, PsbB, PsbC, PsbD, PsbE, PsbF, PsbH, PsbI, PsbJ, PsbK, PsbL, PsbM, PsbT, PsbX, PsbY, PsbZ, Psb30/Ycf12, at least 3 peripheral proteins of the oxygen-evolving complex and a large number of cofactors. It forms dimeric complexes. The D1/D2 heterodimer binds P680, chlorophylls that are the primary electron donor of PSII, and subsequent electron acceptors. It shares a non-heme iron and each subunit binds pheophytin, quinone, additional chlorophylls, carotenoids and lipids. D1 provides most of the ligands for the Mn4-Ca-O5 cluster of the oxygen-evolving complex (OEC). There is also a Cl(-1) ion associated with D1 and D2, which is required for oxygen evolution. The PSII complex binds additional chlorophylls, carotenoids and specific lipids. serves as cofactor. In terms of processing, tyr-161 forms a radical intermediate that is referred to as redox-active TyrZ, YZ or Y-Z. Post-translationally, C-terminally processed by CTPA; processing is essential to allow assembly of the oxygen-evolving complex and thus photosynthetic growth.

Its subcellular location is the plastid. The protein localises to the chloroplast thylakoid membrane. The catalysed reaction is 2 a plastoquinone + 4 hnu + 2 H2O = 2 a plastoquinol + O2. In terms of biological role, photosystem II (PSII) is a light-driven water:plastoquinone oxidoreductase that uses light energy to abstract electrons from H(2)O, generating O(2) and a proton gradient subsequently used for ATP formation. It consists of a core antenna complex that captures photons, and an electron transfer chain that converts photonic excitation into a charge separation. The D1/D2 (PsbA/PsbD) reaction center heterodimer binds P680, the primary electron donor of PSII as well as several subsequent electron acceptors. This Cryptomeria japonica (Japanese cedar) protein is Photosystem II protein D1.